Here is a 259-residue protein sequence, read N- to C-terminus: Small ribosomal subunit protein uS2 (259 aa).

Belongs to the universal ribosomal protein uS2 family.

The polypeptide is Small ribosomal subunit protein uS2 (Streptococcus pneumoniae (strain CGSP14)).